We begin with the raw amino-acid sequence, 71 residues long: Equinin B (71 aa).

Positions Met1–Gly11 are cleaved as a signal peptide. The propeptide occupies Gly46 to Tyr71.

In terms of processing, contains 4 disulfide bonds.

It localises to the secreted. Its subcellular location is the target cell membrane. In terms of biological role, antimicrobial peptide with inhibitory activity against both Gram-positive and Gram-negative bacteria (E.coli (MIC=0.25 ug/ml), M.lysodeikticus (MIC=0.25 ug/ml), and V.alginolyticus (MIC=0.25 ug/ml)). Does not show hemolytic activity. The sequence is that of Equinin B from Actinia equina (Beadlet anemone).